We begin with the raw amino-acid sequence, 443 residues long: Probable glutamate dehydrogenase (443 aa).

Lys-86 is a catalytic residue.

Belongs to the Glu/Leu/Phe/Val dehydrogenases family.

The catalysed reaction is L-glutamate + NAD(+) + H2O = 2-oxoglutarate + NH4(+) + NADH + H(+). The enzyme catalyses L-glutamate + NADP(+) + H2O = 2-oxoglutarate + NH4(+) + NADPH + H(+). The polypeptide is Probable glutamate dehydrogenase (Sinorhizobium fredii (strain NBRC 101917 / NGR234)).